The following is a 326-amino-acid chain: uncharacterized protein (326 aa).

Belongs to the ParB family.

This is an uncharacterized protein from Acidianus two-tailed virus (ATV).